A 157-amino-acid chain; its full sequence is Protein Smg (157 aa).

It belongs to the Smg family.

In Escherichia coli O139:H28 (strain E24377A / ETEC), this protein is Protein Smg.